The chain runs to 641 residues: MAHVLGIDLGTTNSCMAIVEGGQPVVLENSEGARTTPSIVAFTKSGERLVGQAAKRQAITNSKNTIYSIKRFIGRKFSEVQEEIKRVPYKVIEGKNGDCAVEVEVAGERRVYTPQEISAFILMKLKADAESKLGEKITQAVITVPAYFNDSQRQATKAAGEIAGLEVLRIINEPTAASLAYGLDKKKDERIAVYDLGGGTFDISVLEIGEGVFEVKATNGDTHLGGDDWDAAIMEWIISDFKKETGIDLHGQPDAVQRIKEEAEKAKIALSSALEYEINLPFITADQTGPKHIQKKLTRAKLEQLTEHLAERTVQPVLNCLKDAKLTAADIDELVLVGGMTRMPKIIEIARKLIGREPHKGVNPDEVVAVGAAIQGAVLKGQVKDVLLLDVTPLTLSIETAGGIATPMIPRNTTIPTRKSQIFSTFSDNQPSVEIKVLQGERPMARDNKLLGVFHLDGIPPAPRGVPQIEVTFDIDANGILHVSAKDLGTGREQKITITGSSGLSKEEIERMTKEAEAYREQDLKNKERAEAKNNADNAAYQAEKLLREYGDKVDSAKKMEVEKCIEKVREVIKGDDTEAIKRAMDELNEKVQAISVEMYRAASSKASAASSPPPPPGAGGQKSDVIDAEFEKVDKDKPQA.

Thr-200 bears the Phosphothreonine; by autocatalysis mark. Positions 602-611 (AASSKASAAS) are enriched in low complexity. The segment at 602 to 641 (AASSKASAASSPPPPPGAGGQKSDVIDAEFEKVDKDKPQA) is disordered. Over residues 630 to 641 (EFEKVDKDKPQA) the composition is skewed to basic and acidic residues.

It belongs to the heat shock protein 70 family.

Functionally, acts as a chaperone. The protein is Chaperone protein DnaK of Methylacidiphilum infernorum (isolate V4) (Methylokorus infernorum (strain V4)).